A 234-amino-acid chain; its full sequence is Ammonia monooxygenase gamma subunit (234 aa).

Positions 1-20 (MRMIKFLLLAILLAPFVAHS) are cleaved as a signal peptide. The Cytochrome c domain occupies 38-193 (ESLQRGAKGF…RFVADLVNYM (156 aa)). Heme c is bound by residues cysteine 51, cysteine 54, and histidine 55. The helical transmembrane segment at 206–226 (ELGITVLLFLFGMLGLTYLLK) threads the bilayer.

This sequence belongs to the cytochrome c family. The soluble ammonia monooxygenase is a nonamer composed of three alpha subunits (AmoA), three beta subunits (AmoB) and three gamma subunits (Cytochrome c1 PetC). Heme c serves as cofactor.

The protein resides in the cell membrane. It is found in the cytoplasm. Functionally, part of the ammonia monooxygenase complex, which catalyzes the oxidation of ammonia to hydroxylamine, the first reaction in the process of ammonia oxidation to nitrite. The sequence is that of Ammonia monooxygenase gamma subunit from Nitrosomonas europaea (strain ATCC 19718 / CIP 103999 / KCTC 2705 / NBRC 14298).